Consider the following 460-residue polypeptide: Muscarinic acetylcholine receptor M1 (460 aa).

At 1-22 (MNTSAPPAVSPNITVLAPGKGP) the chain is on the extracellular side. 2 N-linked (GlcNAc...) asparagine glycosylation sites follow: N2 and N12. A helical membrane pass occupies residues 23 to 48 (WQVAFIGITTGLLSLATVTGNLLVLI). Residues 49 to 62 (SFKVNTELKTVNNY) are Cytoplasmic-facing. The helical transmembrane segment at 63–84 (FLLSLACADLIIGTFSMNLYTT) threads the bilayer. Over 85 to 95 (YLLMGHWALGT) the chain is Extracellular. A helical membrane pass occupies residues 96-121 (LACDLWLALDYVASNASVMNLLLISF). C98 and C178 are oxidised to a cystine. Residues 122-142 (DRYFSVTRPLSYRAKRTPRRA) lie on the Cytoplasmic side of the membrane. The helical transmembrane segment at 143 to 164 (ALMIGLAWLVSFVLWAPAILFW) threads the bilayer. The Extracellular portion of the chain corresponds to 165–185 (QYLVGERTVLAGQCYIQFLSQ). A helical membrane pass occupies residues 186–209 (PIITFGTAMAAFYLPVTVMCTLYW). Topologically, residues 210-366 (RIYRETENRA…LVKEKKAART (157 aa)) are cytoplasmic. Disordered regions lie at residues 225–256 (LQGS…ETPP), 274–297 (WKEE…EEPG), and 310–351 (EAQA…QLAK). T230 is subject to Phosphothreonine. Low complexity predominate over residues 238–247 (SSSSERSQPG). Basic residues predominate over residues 328–343 (RPTKKGRDRAGKGQKP). A helical membrane pass occupies residues 367–390 (LSAILLAFILTWTPYNIMVLVSTF). Residues 391–397 (CKDCVPE) lie on the Extracellular side of the membrane. Residues 398 to 420 (TLWELGYWLCYVNSTINPMCYAL) form a helical membrane-spanning segment. The Cytoplasmic segment spans residues 421-460 (CNKAFRDTFRLLLLCRWDKRRWRKIPKRPGSVHRTPSRQC). T428 carries the post-translational modification Phosphothreonine. The residue at position 451 (S451) is a Phosphoserine. Residue T455 is modified to Phosphothreonine. S457 is modified (phosphoserine).

This sequence belongs to the G-protein coupled receptor 1 family. Muscarinic acetylcholine receptor subfamily. CHRM1 sub-subfamily. As to quaternary structure, interacts with GPRASP2. Interacts with TMEM147.

It localises to the cell membrane. Its subcellular location is the postsynaptic cell membrane. Functionally, the muscarinic acetylcholine receptor mediates various cellular responses, including inhibition of adenylate cyclase, breakdown of phosphoinositides and modulation of potassium channels through the action of G proteins. Primary transducing effect is Pi turnover. This Homo sapiens (Human) protein is Muscarinic acetylcholine receptor M1 (CHRM1).